Consider the following 544-residue polypeptide: Chaperonin GroEL (544 aa).

ATP-binding positions include 29–32 (TMGP), Lys-50, 86–90 (DGTTT), Gly-414, 477–479 (NAA), and Asp-493. The disordered stretch occupies residues 525–544 (DKPAMPSMPDMGGMGMPGMM).

This sequence belongs to the chaperonin (HSP60) family. Forms a cylinder of 14 subunits composed of two heptameric rings stacked back-to-back. Interacts with the co-chaperonin GroES.

It localises to the cytoplasm. It catalyses the reaction ATP + H2O + a folded polypeptide = ADP + phosphate + an unfolded polypeptide.. Its function is as follows. Together with its co-chaperonin GroES, plays an essential role in assisting protein folding. The GroEL-GroES system forms a nano-cage that allows encapsulation of the non-native substrate proteins and provides a physical environment optimized to promote and accelerate protein folding. The protein is Chaperonin GroEL of Aliarcobacter butzleri (strain RM4018) (Arcobacter butzleri).